A 458-amino-acid polypeptide reads, in one-letter code: Exodeoxyribonuclease 7 large subunit (458 aa).

Belongs to the XseA family. In terms of assembly, heterooligomer composed of large and small subunits.

It is found in the cytoplasm. It catalyses the reaction Exonucleolytic cleavage in either 5'- to 3'- or 3'- to 5'-direction to yield nucleoside 5'-phosphates.. Bidirectionally degrades single-stranded DNA into large acid-insoluble oligonucleotides, which are then degraded further into small acid-soluble oligonucleotides. In Escherichia coli O17:K52:H18 (strain UMN026 / ExPEC), this protein is Exodeoxyribonuclease 7 large subunit.